A 1432-amino-acid polypeptide reads, in one-letter code: MDLQNYGAAPERVDFSKIKTSIPIPNLIEVQKKSYERFLQMDLLPNEREDIGLQTVFNSVFPISDFRGVSDLEFVDYSIGNWECKCGNLKGLHHLRSTCRNCGATIRTDPFHAGDILCHHCGTFNKNVVTFCNKCGDPVGLQLKYDMQECQERGMTYAAPLKVTIRLTVYSKDPETQKKSVRDIKEQEVFFGEIPLMTDNGTFIINGTERVIVSQLHRSPGVFFERVPAQGYFLGKIIPYRGSWVEFEYDNKNILYVRIDRKRKFYGSVFLRALGLKTDEQILRAFYRVSKMEIRDKKIYWNVDEGLTGLKLSHAITTKSGDTVVGQGKKITASLFKELQKAKIEKVEVAPNDLEGAHVVADVVDMTTGEVMIDANSELTTTVMSKLIEAGITEFEIFFPERDDVGTVIAATIRKDAVKTQNEALIEIYRKLRPGDPPTLDTATQLFQGMFFDPRKYDFSRVGRMKFNIKLYDRSDATALDKRTLDSDDFKSTIRYLLKLRKGIGAVDDIDHLGNRRVRAVGELLENQFRIGLVRMERAIKEKMSVYQEMSTAMPHDLVNAKPVMAAIREFFGSSQLSQFMDQTNPLSEITHKRRLSALGPGGLSRERAGFEVRDVHPTHYGRICPIETPEGPNIGLISSLSCFARINEYGFIESPYRKVIKGAVVDEVKVLNPGDTDYKVGDIVRRGDMDEANRKLGGKKQAAEFEAHCEYLSAWEEDKWTIAQANVELDEKGRIVPDLSNARQAGNFVLKPKEEIEYIDVSPKQLVSVAASLIPFLENDDANRALMGSNMQRQAVPLLRADAPYVGTGMEMVTARDSGAVVLNKRAGVVDSVDSERIIVRVEGAAHEGQLSREVGADIYQLTKFKRSNQNTCINQKPIVRVGQRVPKGAVLADGPCTDLGELALGRNVLVAFMPWRGYNFEDAILVSEKLVKEDYYTSIHIEEFEIEARDTKLGPEEITRDIPNIADSFLRNLDESGIIRIGATVKPGDILVGKVTPKGETQLTPEEKLLRAIFGEKAGDVKDASLYCPPGIEGTIVDCKIFSRKGQEKDERSKAIEESQIQRLQRNLQDEIRILTDERAKRLGTLLDGKKLLADLHDEKTNKRLLSKDTELTRELIEKMKSRDLKRMRLANKDPRLNEQIDEIEEMTSRQIAVLEKITDEKIAKLRKGDELPPGVIKLVKVYIAMKRKLSVGDKMAGRHGNKGVIARILPEEDMPYLPDGTPVEIVLNPLGVPSRMNVGQILETHLGWAAKALGVQFATPVFDGATEREIKKNLTAAGLPTSGKTALFDGMTGTQFEQPVTVGYIYMLKLSHLVDDKIHARSIGPYSLITQQPLGGKAQFGGQRFGEMEVWALEAYGAAYILQELLTAKSDDVYGRAKIYEAIVKGEAAIEPGVPESFNVLIRELQSLCLDVELMKKPREVPDTALAAD.

Belongs to the RNA polymerase beta chain family. The RNAP catalytic core consists of 2 alpha, 1 beta, 1 beta' and 1 omega subunit. When a sigma factor is associated with the core the holoenzyme is formed, which can initiate transcription.

It carries out the reaction RNA(n) + a ribonucleoside 5'-triphosphate = RNA(n+1) + diphosphate. In terms of biological role, DNA-dependent RNA polymerase catalyzes the transcription of DNA into RNA using the four ribonucleoside triphosphates as substrates. The sequence is that of DNA-directed RNA polymerase subunit beta from Solibacter usitatus (strain Ellin6076).